The following is a 198-amino-acid chain: Probable thymidylate kinase (198 aa).

ATP is bound at residue 9–16; sequence GIDGSGKT.

Belongs to the thymidylate kinase family.

It carries out the reaction dTMP + ATP = dTDP + ADP. This Methanococcus vannielii (strain ATCC 35089 / DSM 1224 / JCM 13029 / OCM 148 / SB) protein is Probable thymidylate kinase.